The following is a 282-amino-acid chain: Nicotianamine synthase-like 5 protein (282 aa).

It belongs to the nicotianamine synthase (NAS)-like family.

This chain is Nicotianamine synthase-like 5 protein (NAS5), found in Hordeum vulgare (Barley).